A 155-amino-acid chain; its full sequence is Mediator of RNA polymerase II transcription subunit 10 (155 aa).

Positions 54–80 (SSHTQSHAPDADTAQANPSDPPISTIE) are disordered.

The protein belongs to the Mediator complex subunit 10 family. As to quaternary structure, component of the Mediator complex.

It localises to the nucleus. Its function is as follows. Component of the Mediator complex, a coactivator involved in the regulated transcription of nearly all RNA polymerase II-dependent genes. Mediator functions as a bridge to convey information from gene-specific regulatory proteins to the basal RNA polymerase II transcription machinery. Mediator is recruited to promoters by direct interactions with regulatory proteins and serves as a scaffold for the assembly of a functional preinitiation complex with RNA polymerase II and the general transcription factors. The chain is Mediator of RNA polymerase II transcription subunit 10 (nut2) from Aspergillus terreus (strain NIH 2624 / FGSC A1156).